Reading from the N-terminus, the 395-residue chain is Tryptophan--tRNA ligase, cytoplasmic (395 aa).

A 'HIGH' region motif is present at residues 91–100; sequence PSSDSMHLGH. The 'KMSKS' region signature appears at 275 to 279; that stretch reads KMSAS. Threonine 288 and threonine 290 each carry phosphothreonine.

Belongs to the class-I aminoacyl-tRNA synthetase family.

It is found in the cytoplasm. The catalysed reaction is tRNA(Trp) + L-tryptophan + ATP = L-tryptophyl-tRNA(Trp) + AMP + diphosphate + H(+). In Schizosaccharomyces pombe (strain 972 / ATCC 24843) (Fission yeast), this protein is Tryptophan--tRNA ligase, cytoplasmic (wrs1).